A 122-amino-acid chain; its full sequence is Vitelline membrane protein Vm32E (122 aa).

Residues methionine 1–alanine 19 form the signal peptide. Residues serine 40–threonine 79 enclose the VM domain.

Belongs to the vitelline membrane family.

The protein localises to the secreted. In terms of biological role, major early eggshell protein. This chain is Vitelline membrane protein Vm32E, found in Drosophila persimilis (Fruit fly).